The following is a 518-amino-acid chain: Probable cytochrome P450 317a1 (518 aa).

Cysteine 461 contacts heme.

This sequence belongs to the cytochrome P450 family. Heme is required as a cofactor.

The protein localises to the endoplasmic reticulum membrane. It is found in the microsome membrane. Its function is as follows. May be involved in the metabolism of insect hormones and in the breakdown of synthetic insecticides. The sequence is that of Probable cytochrome P450 317a1 (Cyp317a1) from Drosophila melanogaster (Fruit fly).